The primary structure comprises 250 residues: Flagellar L-ring protein (250 aa).

An N-terminal signal peptide occupies residues 1-32 (MTRINTNTQKNNNTKFSKLILGVMVSSIVLSG). Cys-33 is lipidated: N-palmitoyl cysteine. Cys-33 carries S-diacylglycerol cysteine lipidation.

It belongs to the FlgH family. As to quaternary structure, the basal body constitutes a major portion of the flagellar organelle and consists of four rings (L,P,S, and M) mounted on a central rod.

It localises to the cell outer membrane. The protein localises to the bacterial flagellum basal body. In terms of biological role, assembles around the rod to form the L-ring and probably protects the motor/basal body from shearing forces during rotation. The chain is Flagellar L-ring protein from Hydrogenovibrio crunogenus (strain DSM 25203 / XCL-2) (Thiomicrospira crunogena).